Consider the following 239-residue polypeptide: Probable transcriptional regulatory protein BCG9842_B4761 (239 aa).

It belongs to the TACO1 family. YeeN subfamily.

The protein localises to the cytoplasm. This Bacillus cereus (strain G9842) protein is Probable transcriptional regulatory protein BCG9842_B4761.